Here is a 566-residue protein sequence, read N- to C-terminus: Arginine--tRNA ligase (566 aa).

The 'HIGH' region signature appears at 121–131; that stretch reads PNIAKPMSMGH.

This sequence belongs to the class-I aminoacyl-tRNA synthetase family. In terms of assembly, monomer.

The protein localises to the cytoplasm. The enzyme catalyses tRNA(Arg) + L-arginine + ATP = L-arginyl-tRNA(Arg) + AMP + diphosphate. This chain is Arginine--tRNA ligase, found in Oenococcus oeni (strain ATCC BAA-331 / PSU-1).